The following is a 350-amino-acid chain: Casein kinase II subunit alpha' (350 aa).

Positions 40-325 (YQLVRKLGRG…AKEAMEHPYF (286 aa)) constitute a Protein kinase domain. Residues 46 to 54 (LGRGKYSEV) and K69 each bind ATP. The Proton acceptor role is filled by D157.

It belongs to the protein kinase superfamily. Ser/Thr protein kinase family. CK2 subfamily. Tetramer composed of an alpha chain, an alpha' and two beta chains.

The enzyme catalyses L-seryl-[protein] + ATP = O-phospho-L-seryl-[protein] + ADP + H(+). It catalyses the reaction L-threonyl-[protein] + ATP = O-phospho-L-threonyl-[protein] + ADP + H(+). Functionally, casein kinases are operationally defined by their preferential utilization of acidic proteins such as caseins as substrates. The alpha and alpha' chains contain the catalytic site. Participates in Wnt signaling. This is Casein kinase II subunit alpha' from Gallus gallus (Chicken).